Consider the following 312-residue polypeptide: Pimeloyl-[acyl-carrier protein] methyl ester esterase (312 aa).

The AB hydrolase-1 domain maps to 17–241 (VYLIHGWGAN…KAAHAPFLSH (225 aa)). Residues W23, 83–84 (SL), and 145–149 (FLQLQ) contribute to the substrate site. S83 functions as the Nucleophile in the catalytic mechanism. Residues D207 and H235 contribute to the active site. H235 is a binding site for substrate.

The protein belongs to the AB hydrolase superfamily. Carboxylesterase BioH family. Monomer.

It is found in the cytoplasm. The catalysed reaction is 6-carboxyhexanoyl-[ACP] methyl ester + H2O = 6-carboxyhexanoyl-[ACP] + methanol + H(+). It functions in the pathway cofactor biosynthesis; biotin biosynthesis. In terms of biological role, the physiological role of BioH is to remove the methyl group introduced by BioC when the pimeloyl moiety is complete. It allows to synthesize pimeloyl-ACP via the fatty acid synthetic pathway through the hydrolysis of the ester bonds of pimeloyl-ACP esters. In Neisseria meningitidis serogroup A / serotype 4A (strain DSM 15465 / Z2491), this protein is Pimeloyl-[acyl-carrier protein] methyl ester esterase.